The primary structure comprises 219 residues: Transmembrane protein 125 (219 aa).

Helical transmembrane passes span 36 to 56 (LCFAVAVGLVAGCGAGGVALL), 68 to 88 (LAVGTALCLLALLVLVKQLMS), 114 to 134 (ALVVLLSGLVLLVTGLTLAGL), and 147 to 167 (MLSVGITLAASGALLLLGLLL).

It localises to the membrane. This Bos taurus (Bovine) protein is Transmembrane protein 125 (TMEM125).